A 250-amino-acid polypeptide reads, in one-letter code: Non-specific acid phosphatase (250 aa).

The signal sequence occupies residues 1–20 (MKSRYLLFFLPLIVAKYTSA).

It belongs to the class A bacterial acid phosphatase family. Homodimer.

The protein resides in the periplasm. The enzyme catalyses a phosphate monoester + H2O = an alcohol + phosphate. The chain is Non-specific acid phosphatase (phoN) from Salmonella typhi.